Reading from the N-terminus, the 836-residue chain is Protein translocase subunit SecA (836 aa).

ATP contacts are provided by residues glutamine 85, 103–107 (GEGKT), and aspartate 492. Residues cysteine 820, cysteine 822, cysteine 831, and cysteine 832 each contribute to the Zn(2+) site.

It belongs to the SecA family. Monomer and homodimer. Part of the essential Sec protein translocation apparatus which comprises SecA, SecYEG and auxiliary proteins SecDF. Other proteins may also be involved. The cofactor is Zn(2+).

It localises to the cell membrane. It is found in the cytoplasm. It carries out the reaction ATP + H2O + cellular proteinSide 1 = ADP + phosphate + cellular proteinSide 2.. Its function is as follows. Part of the Sec protein translocase complex. Interacts with the SecYEG preprotein conducting channel. Has a central role in coupling the hydrolysis of ATP to the transfer of proteins into and across the cell membrane, serving as an ATP-driven molecular motor driving the stepwise translocation of polypeptide chains across the membrane. The sequence is that of Protein translocase subunit SecA from Clostridium botulinum (strain Eklund 17B / Type B).